The primary structure comprises 173 residues: Large ribosomal subunit protein bL9 (173 aa).

The segment at 150–173 is disordered; the sequence is KQEDKKSLSKKLNKADEQGERAEV.

It belongs to the bacterial ribosomal protein bL9 family.

Binds to the 23S rRNA. The protein is Large ribosomal subunit protein bL9 of Borreliella burgdorferi (strain ZS7) (Borrelia burgdorferi).